Here is a 74-residue protein sequence, read N- to C-terminus: ATP synthase subunit c (74 aa).

2 consecutive transmembrane segments (helical) span residues 8–28 and 52–72; these read FIGTGLMAIGMYGAALGVSNI and IGAGLAEAMGLFSFVIAMLLI.

It belongs to the ATPase C chain family. F-type ATPases have 2 components, F(1) - the catalytic core - and F(0) - the membrane proton channel. F(1) has five subunits: alpha(3), beta(3), gamma(1), delta(1), epsilon(1). F(0) has three main subunits: a(1), b(2) and c(10-14). The alpha and beta chains form an alternating ring which encloses part of the gamma chain. F(1) is attached to F(0) by a central stalk formed by the gamma and epsilon chains, while a peripheral stalk is formed by the delta and b chains.

The protein localises to the cell inner membrane. F(1)F(0) ATP synthase produces ATP from ADP in the presence of a proton or sodium gradient. F-type ATPases consist of two structural domains, F(1) containing the extramembraneous catalytic core and F(0) containing the membrane proton channel, linked together by a central stalk and a peripheral stalk. During catalysis, ATP synthesis in the catalytic domain of F(1) is coupled via a rotary mechanism of the central stalk subunits to proton translocation. In terms of biological role, key component of the F(0) channel; it plays a direct role in translocation across the membrane. A homomeric c-ring of between 10-14 subunits forms the central stalk rotor element with the F(1) delta and epsilon subunits. This chain is ATP synthase subunit c, found in Rickettsia conorii (strain ATCC VR-613 / Malish 7).